The sequence spans 141 residues: Lysozyme 1 (141 aa).

The N-terminal stretch at 1 to 19 is a signal peptide; sequence MKFFIVLVAALALAAPAMG. Residues 20 to 141 form the C-type lysozyme domain; it reads KTFTRCSLAR…GSLPSINDCF (122 aa). 4 disulfide bridges follow: Cys25–Cys140, Cys46–Cys130, Cys81–Cys97, and Cys93–Cys111. Glu51 is a catalytic residue. Asn65 carries an N-linked (GlcNAc...) asparagine glycan. The active site involves Asp69. Asn104 carries N-linked (GlcNAc...) asparagine glycosylation.

This sequence belongs to the glycosyl hydrolase 22 family.

The catalysed reaction is Hydrolysis of (1-&gt;4)-beta-linkages between N-acetylmuramic acid and N-acetyl-D-glucosamine residues in a peptidoglycan and between N-acetyl-D-glucosamine residues in chitodextrins.. May not function as a self-defense protein, but as a digestive enzyme, probably in the gut of the insect body. Inactive towards Micrococcus luteus. Active toward glycol chitin. This chain is Lysozyme 1, found in Musca domestica (House fly).